Consider the following 234-residue polypeptide: Phosphoribosylaminoimidazole-succinocarboxamide synthase (234 aa).

It belongs to the SAICAR synthetase family.

It catalyses the reaction 5-amino-1-(5-phospho-D-ribosyl)imidazole-4-carboxylate + L-aspartate + ATP = (2S)-2-[5-amino-1-(5-phospho-beta-D-ribosyl)imidazole-4-carboxamido]succinate + ADP + phosphate + 2 H(+). It participates in purine metabolism; IMP biosynthesis via de novo pathway; 5-amino-1-(5-phospho-D-ribosyl)imidazole-4-carboxamide from 5-amino-1-(5-phospho-D-ribosyl)imidazole-4-carboxylate: step 1/2. The sequence is that of Phosphoribosylaminoimidazole-succinocarboxamide synthase from Clostridium botulinum (strain ATCC 19397 / Type A).